A 174-amino-acid chain; its full sequence is Adenine phosphoribosyltransferase (174 aa).

Belongs to the purine/pyrimidine phosphoribosyltransferase family. As to quaternary structure, homodimer.

It is found in the cytoplasm. It carries out the reaction AMP + diphosphate = 5-phospho-alpha-D-ribose 1-diphosphate + adenine. It participates in purine metabolism; AMP biosynthesis via salvage pathway; AMP from adenine: step 1/1. Its function is as follows. Catalyzes a salvage reaction resulting in the formation of AMP, that is energically less costly than de novo synthesis. The sequence is that of Adenine phosphoribosyltransferase from Mycolicibacterium vanbaalenii (strain DSM 7251 / JCM 13017 / BCRC 16820 / KCTC 9966 / NRRL B-24157 / PYR-1) (Mycobacterium vanbaalenii).